Here is a 622-residue protein sequence, read N- to C-terminus: Sodium-coupled monocarboxylate transporter 1 (622 aa).

Topologically, residues 1 to 15 (MVTPGNIGSFTVWDY) are extracellular. The chain crosses the membrane as a helical span at residues 16–36 (LVFALMLLISAVIGIYYAFAG). At 37 to 51 (GGQKTSKDFLMGGRS) the chain is on the cytoplasmic side. A helical membrane pass occupies residues 52-72 (MTAVPVALSLTASFMSAVTVL). The Extracellular segment spans residues 73–83 (GTPAEVYRFGA). Residues 84–104 (MFIIFAFSYTIVVIISSEVFL) traverse the membrane as a helical segment. The Cytoplasmic segment spans residues 105 to 128 (PVFYRLGITSTYEYLELRFNKFVR). The chain crosses the membrane as a helical span at residues 129–149 (LLGTILFIIQTVLYTGIVIYA). At 150 to 161 (PALALNQVTGFD) the chain is on the extracellular side. The helical transmembrane segment at 162-182 (LWGAVVATGVVCTFYCTMGGL) threads the bilayer. The Cytoplasmic segment spans residues 183-184 (KA). A helical membrane pass occupies residues 185–205 (VVWTDVFQVGIMVAGFTSVII). Residues 206–241 (RAVVVQGGIGPILNDSYYGDRLNFWDFDPNPLKRHT) are Extracellular-facing. The N-linked (GlcNAc...) asparagine glycan is linked to Asn219. Residues 242–262 (FWTIVVGGTFTWTGIYGVNQA) form a helical membrane-spanning segment. The Cytoplasmic portion of the chain corresponds to 263–283 (QVQRYIACKTRFQAKMSLYVN). A helical transmembrane segment spans residues 284-304 (LIGLWAILACAVLSGLAMYSI). Topologically, residues 305–336 (YKDCDPWTAKFVSAPDQLMPYLALDILRDYPG) are extracellular. Residues 337–357 (LPGLFVSCAYSGTLSTVSSSI) traverse the membrane as a helical segment. Residues 358–389 (NALAAVTVEDLIKPYIRSLSEKKMSWISKGTS) are Cytoplasmic-facing. The chain crosses the membrane as a helical span at residues 390-410 (LLYGAICIGMAGIASLMGGLL). Topologically, residues 411–415 (QAALS) are extracellular. The helical transmembrane segment at 416-436 (IFGMVGGPLLGLFSLGILFPF) threads the bilayer. The Cytoplasmic portion of the chain corresponds to 437 to 438 (VN). The chain crosses the membrane as a helical span at residues 439-459 (SLGAVIGLLSGFAISLWVGIG). At 460–521 (SQIYAPSPSS…LADSWYSLSY (62 aa)) the chain is on the extracellular side. N-linked (GlcNAc...) asparagine glycans are attached at residues Asn481 and Asn488. Residues 522–542 (LYFSTIGTIVAVLVGVIVSLL) form a helical membrane-spanning segment. Residues 543 to 622 (SGGLKQNVNR…KGEKTNGITA (80 aa)) are Cytoplasmic-facing. Residues 591–622 (DNDMEQGTDNPAFNNMEMTSTEKGEKTNGITA) form a disordered region. Polar residues predominate over residues 595 to 609 (EQGTDNPAFNNMEMT).

Belongs to the sodium:solute symporter (SSF) (TC 2.A.21) family. In the gastrula and neurula stages, expressed in the gastrula anterior endoderm and in the entire circumference of the blastopore lip superficial endoderm. At tailbud stages, abundant expression observed in the ventral midgut region. As development proceeds expression becomes restricted to the liver diverticulum and ultimately to the presumptive gallbladder, by tadpole stage 35. Also present in pronephros and the tip of the tail.

The protein resides in the apical cell membrane. The catalysed reaction is (S)-lactate(out) + 2 Na(+)(out) = (S)-lactate(in) + 2 Na(+)(in). It carries out the reaction propanoate(out) + 2 Na(+)(out) = propanoate(in) + 2 Na(+)(in). The enzyme catalyses pyruvate(out) + 2 Na(+)(out) = pyruvate(in) + 2 Na(+)(in). It catalyses the reaction acetate(out) + 2 Na(+)(out) = acetate(in) + 2 Na(+)(in). The catalysed reaction is butanoate(out) + 2 Na(+)(out) = butanoate(in) + 2 Na(+)(in). It carries out the reaction nicotinate(out) + 2 Na(+)(out) = nicotinate(in) + 2 Na(+)(in). The enzyme catalyses (R)-3-hydroxybutanoate(out) + 2 Na(+)(out) = (R)-3-hydroxybutanoate(in) + 2 Na(+)(in). It catalyses the reaction acetoacetate(out) + 2 Na(+)(out) = acetoacetate(in) + 2 Na(+)(in). The catalysed reaction is 4-methyl-2-oxopentanoate(out) + 2 Na(+)(out) = 4-methyl-2-oxopentanoate(in) + 2 Na(+)(in). It carries out the reaction 5-oxo-L-proline(out) + 2 Na(+)(out) = 5-oxo-L-proline(in) + 2 Na(+)(in). The enzyme catalyses iodide(out) = iodide(in). It catalyses the reaction chloride(in) = chloride(out). The catalysed reaction is nitrate(in) = nitrate(out). It carries out the reaction bromide(in) = bromide(out). Its function is as follows. Acts as an electrogenic sodium (Na(+)) and chloride (Cl-)-dependent sodium-coupled solute transporter, including transport of monocarboxylates (short-chain fatty acids including L-lactate, D-lactate, pyruvate, acetate, propionate, valerate and butyrate), mocarboxylate drugs (nicotinate, benzoate, salicylate and 5-aminosalicylate) and ketone bodies (beta-D-hydroxybutyrate, acetoacetate and alpha-ketoisocaproate), with a Na(+):substrate stoichiometry of between 4:1 and 2:1. Catalyzes passive carrier mediated diffusion of iodide. Mediates iodide transport from the thyrocyte into the colloid lumen through the apical membrane. Mediates sodium-coupled electrogenic transport of pyroglutamate (5-oxo-L-proline). Can mediate the transport of chloride, bromide, iodide and nitrate ions when external concentration of sodium ions is reduced. The protein is Sodium-coupled monocarboxylate transporter 1 of Xenopus laevis (African clawed frog).